Reading from the N-terminus, the 430-residue chain is Elongation factor 1-gamma (430 aa).

A GST N-terminal domain is found at 2–84; it reads VAGKLYTYPE…YVANETLRGS (83 aa). The GST C-terminal domain occupies 85-213; it reads SDLEKAQIIQ…FKLCEKAGEF (129 aa). Basic and acidic residues-rich tracts occupy residues 232–255 and 269–278; these read KTEK…KEQE and PKSKDPFDEM. The disordered stretch occupies residues 232-278; that stretch reads KTEKAPKAVKAKPEKKEVPKKEQEEPADAAEEALAAEPKSKDPFDEM. The 160-residue stretch at 271–430 folds into the EF-1-gamma C-terminal domain; sequence SKDPFDEMPK…RKFNQGKIFK (160 aa).

As to quaternary structure, EF-1 is composed of four subunits: alpha, beta, delta, and gamma.

Functionally, probably plays a role in anchoring the complex to other cellular components. This chain is Elongation factor 1-gamma, found in Artemia salina (Brine shrimp).